The following is a 118-amino-acid chain: DNA-directed RNA polymerase subunit omega (118 aa).

It belongs to the RNA polymerase subunit omega family. The RNAP catalytic core consists of 2 alpha, 1 beta, 1 beta' and 1 omega subunit. When a sigma factor is associated with the core the holoenzyme is formed, which can initiate transcription.

It carries out the reaction RNA(n) + a ribonucleoside 5'-triphosphate = RNA(n+1) + diphosphate. Functionally, promotes RNA polymerase assembly. Latches the N- and C-terminal regions of the beta' subunit thereby facilitating its interaction with the beta and alpha subunits. The chain is DNA-directed RNA polymerase subunit omega from Paracoccus denitrificans (strain Pd 1222).